The primary structure comprises 156 residues: ATP synthase subunit b (156 aa).

Residues I5–P27 traverse the membrane as a helical segment.

The protein belongs to the ATPase B chain family. As to quaternary structure, F-type ATPases have 2 components, F(1) - the catalytic core - and F(0) - the membrane proton channel. F(1) has five subunits: alpha(3), beta(3), gamma(1), delta(1), epsilon(1). F(0) has three main subunits: a(1), b(2) and c(10-14). The alpha and beta chains form an alternating ring which encloses part of the gamma chain. F(1) is attached to F(0) by a central stalk formed by the gamma and epsilon chains, while a peripheral stalk is formed by the delta and b chains.

The protein localises to the cell inner membrane. Its function is as follows. F(1)F(0) ATP synthase produces ATP from ADP in the presence of a proton or sodium gradient. F-type ATPases consist of two structural domains, F(1) containing the extramembraneous catalytic core and F(0) containing the membrane proton channel, linked together by a central stalk and a peripheral stalk. During catalysis, ATP synthesis in the catalytic domain of F(1) is coupled via a rotary mechanism of the central stalk subunits to proton translocation. Functionally, component of the F(0) channel, it forms part of the peripheral stalk, linking F(1) to F(0). The sequence is that of ATP synthase subunit b from Francisella philomiragia subsp. philomiragia (strain ATCC 25017 / CCUG 19701 / FSC 153 / O#319-036).